The sequence spans 643 residues: Hepatoma-derived growth factor-related protein 2 (643 aa).

Residues 7 to 64 (PGDLVFAKMKGYPHWPARIDDVKDGAVKPPPNKYPIFFYGTHETAFLAPKDLFPYEKC) form the PWWP domain. 2 disordered regions span residues 88 to 450 (PQAS…KKPE) and 548 to 643 (LESQ…NQTS). Positions 90 to 104 (ASYSLPPASVSSSDS) are enriched in low complexity. The span at 107–116 (PEEKSTARSD) shows a compositional bias: basic and acidic residues. A compositionally biased stretch (acidic residues) spans 176–187 (SEEENSDSDQDF). The span at 194-204 (PRIQRRTTNLG) shows a compositional bias: polar residues. The segment covering 209–231 (IFAESDSKSDESEDEKKEEEQKK) has biased composition (basic and acidic residues). The segment covering 232 to 249 (SPSSSSASSPSLSSSDSE) has biased composition (low complexity). Basic and acidic residues-rich tracts occupy residues 290-353 (SVDR…DSSK), 373-382 (EDKKPVKEVK), and 417-450 (RPSESARKTNQKEKRGERPRGRPSKVEKEKKKPE). Residues 295–345 (SEWKKRDEERRRELEERRKKEQEEQLRRLREEEREEEERKKREKAEKGDKS) adopt a coiled-coil conformation. The segment covering 549–559 (ESQQKTVQKVN) has biased composition (polar residues). Composition is skewed to basic and acidic residues over residues 560–575 (TAEKDPEEEKQTGKVE) and 608–622 (NKTEMETKQNNHAEH).

The protein belongs to the HDGF family.

The protein resides in the nucleus. It localises to the cytoplasm. In terms of biological role, may act as a regulator of myogenesis. Promotes the repair of DNA double-strand breaks (DSBs) through the homologous recombination pathway by facilitating the recruitment of the DNA endonuclease RBBP8 to the DSBs. This is Hepatoma-derived growth factor-related protein 2 (hdgfl2) from Xenopus tropicalis (Western clawed frog).